The following is a 599-amino-acid chain: DNA primase (599 aa).

The CHC2-type zinc finger occupies 38–62 (CPFHDEKTPSFTVSEDKQICHCFGC). The 82-residue stretch at 260–341 (DEIVLLEGFM…NVFVIQLPSG (82 aa)) folds into the Toprim domain. 3 residues coordinate Mg(2+): Glu266, Asp310, and Asp312.

It belongs to the DnaG primase family. Monomer. Interacts with DnaB. The cofactor is Zn(2+). It depends on Mg(2+) as a cofactor.

It carries out the reaction ssDNA + n NTP = ssDNA/pppN(pN)n-1 hybrid + (n-1) diphosphate.. RNA polymerase that catalyzes the synthesis of short RNA molecules used as primers for DNA polymerase during DNA replication. This Staphylococcus aureus (strain COL) protein is DNA primase.